Consider the following 373-residue polypeptide: Lipoyl amidotransferase LIPT1, mitochondrial (373 aa).

The transit peptide at 1 to 25 (MLIPLSMKNCFRLLCQHKVPAAGFK) directs the protein to the mitochondrion. The 187-residue stretch at 57–243 (LEGKPILFLW…EYAAHHQVDG (187 aa)) folds into the BPL/LPL catalytic domain. (R)-lipoyl-5'-AMP is bound by residues Y107, K151, K161, and T179.

This sequence belongs to the LplA family.

It is found in the mitochondrion. It carries out the reaction (R)-lipoyl-5'-AMP + L-lysyl-[lipoyl-carrier protein] = N(6)-[(R)-lipoyl]-L-lysyl-[lipoyl-carrier protein] + AMP + 2 H(+). The enzyme catalyses N(6)-[(R)-lipoyl]-L-lysyl-[glycine-cleavage complex H protein] + L-lysyl-[lipoyl-carrier protein] = L-lysyl-[glycine-cleavage complex H protein] + N(6)-[(R)-lipoyl]-L-lysyl-[lipoyl-carrier protein]. It functions in the pathway protein modification; protein lipoylation via exogenous pathway; protein N(6)-(lipoyl)lysine from lipoate: step 2/2. Its function is as follows. Lipoyl amidotransferase that catalyzes the transfer of lipoyl moieties from lipoyl-protein H of the glycine cleavage system (lipoyl-GCSH) to E2 subunits of the pyruvate dehydrogenase complex (PDCE2). Unable to catalyze the transfer of octanoyl from octanoyl-GCSH to PDCE2. In vitro, it is also able to catalyze the transfer of the lipoyl group from lipoyl-AMP to the specific lysine residue of lipoyl domains of lipoate-dependent enzymes but this reaction may not be physiologically relevant. This is Lipoyl amidotransferase LIPT1, mitochondrial from Mus musculus (Mouse).